The primary structure comprises 325 residues: 5-dehydro-2-deoxygluconokinase (325 aa).

The protein belongs to the carbohydrate kinase PfkB family.

It carries out the reaction 5-dehydro-2-deoxy-D-gluconate + ATP = 6-phospho-5-dehydro-2-deoxy-D-gluconate + ADP + H(+). It functions in the pathway polyol metabolism; myo-inositol degradation into acetyl-CoA; acetyl-CoA from myo-inositol: step 5/7. Its function is as follows. Catalyzes the phosphorylation of 5-dehydro-2-deoxy-D-gluconate (2-deoxy-5-keto-D-gluconate or DKG) to 6-phospho-5-dehydro-2-deoxy-D-gluconate (DKGP). The polypeptide is 5-dehydro-2-deoxygluconokinase (Bacillus licheniformis (strain ATCC 14580 / DSM 13 / JCM 2505 / CCUG 7422 / NBRC 12200 / NCIMB 9375 / NCTC 10341 / NRRL NRS-1264 / Gibson 46)).